A 100-amino-acid chain; its full sequence is Defensin-6 (100 aa).

The first 19 residues, 1–19 (MRTLTILTAVLLVALQAKA), serve as a signal peptide directing secretion. Positions 20 to 68 (EPLQAEDDPLQAKAYEADAQEQRGANDQDFAVSFAEDASSSLRALGSTR) are excised as a propeptide. Cystine bridges form between C72–C99, C74–C88, and C78–C98.

It belongs to the alpha-defensin family. As to quaternary structure, homodimer. Self-assembles into higher-order oligomers termed nanonets, fibril-like structures that entrap microbes. Self-assembly into nanonets seems to protect against proteolytic digestion in duodenal fluid. Interacts with Y.enterocolitica invasin and S.typhimurium fliC/flagellin; the interaction creates an anchoring site for progressive DEFA6 self-assembly into nanonets. Proteolytically cleaved by trypsin at Arg-68; the propeptide is stored in the tissue of the small intestine and the mature peptide is found in the luminal fluid; cleavage may occur during or after release into the lumen. The N-terminal propeptide region suppresses self-assembly and renders DEFA6 propeptide unable to agglutinate bacteria and protect human epithelial cells from bacterial invasion. In terms of processing, under reducing conditions, naturally present in the gut owing to the low redox potential or enzymatically generated by the thioredoxin system, the disulfide bridges are opened leading to a conformational change of DEF6, thereby changing its antimicrobial spectrum. The reduced form exhibits inhibitory activity against anaerobic bacteria, in contrast to the minimal antimicrobial activity of the disulfide-linked oxidized form. The formation of higher-order nanonets and bacterial entrapment is independent of the redox state. In terms of tissue distribution, expressed in Paneth cells of the small intestine (at protein level).

Its subcellular location is the secreted. The protein resides in the cytoplasmic vesicle. The protein localises to the secretory vesicle. In terms of biological role, host-defense peptide that contributes to intestinal innate immunity and mediates homeostasis at mucosal surfaces by forming higher-order oligomers that capture bacteria and prevent microbial invasion of the epithelium. After binding to bacterial surface proteins, undergoes ordered self-assembly to form fibril-like nanonets that surround and entangle bacteria and thereby prevent bacterial invasion across the epithelial barrier. Entangles and agglutinates Gram-negative bacteria, such as E.coli, S.typhimurium and Y.enterocolitica, and Gram-positive bacteria such as L.monocytogenes, thereby protecting the intestine against invasion by enteric bacterial pathogens. Blocks adhesion of C.albicans to intestinal epithelial cells and thereby suppresses fungal invasion of epithelial cells and biofilm formation. Under reducing conditions and in an acidic environment similar to the intestinal milieu, exhibits inhibitory activity against anaerobic bacteria such as B.adolescentis, L.acidophilus and B.breve, as well as B.longum and S.thermophilus, possibly by leading to alterations in bacterial cell envelope structures. The disulfide-linked oxidized form exhibits negligible antimicrobial activity against Gram-negative and Gram-positive bacteria, as compared to the enteric defensin DEFA5. This is Defensin-6 (DEFA6) from Homo sapiens (Human).